We begin with the raw amino-acid sequence, 350 residues long: MCQQILRDCILLIHHLCINRKKVSLVMLGPAYNHTMETPASFLLVGIPGLQSSHLWLAISLSAMYIIALLGNTIIVTAIWMDSTRHEPMYCFLCVLAAVDIVMASSVVPKMVSIFCSGDSSISFSACFTQMFFVHLATAVETGLLLTMAFDRYVAICKPLHYKRILTPQVMLGMSMAITIRAIIAITPLSWMVSHLPFCGSNVVVHSYCEHIALARLACADPVPSSLYSLIGSSLMVGSDVAFIAASYILILKAVFGLSSKTAQLKALSTCGSHVGVMALYYLPGMASIYAAWLGQDVVPLHTQVLLADLYVIIPATLNPIIYGMRTKQLRERIWSYLMHVLFDHSNLGS.

Residues 1–55 (MCQQILRDCILLIHHLCINRKKVSLVMLGPAYNHTMETPASFLLVGIPGLQSSHL) lie on the Extracellular side of the membrane. Asn-33 carries an N-linked (GlcNAc...) asparagine glycan. The chain crosses the membrane as a helical span at residues 56 to 76 (WLAISLSAMYIIALLGNTIIV). Residues 77 to 84 (TAIWMDST) lie on the Cytoplasmic side of the membrane. Residues 85 to 105 (RHEPMYCFLCVLAAVDIVMAS) traverse the membrane as a helical segment. The Extracellular portion of the chain corresponds to 106–129 (SVVPKMVSIFCSGDSSISFSACFT). A disulfide bond links Cys-127 and Cys-219. A helical membrane pass occupies residues 130-150 (QMFFVHLATAVETGLLLTMAF). The Cytoplasmic segment spans residues 151–169 (DRYVAICKPLHYKRILTPQ). A helical membrane pass occupies residues 170-190 (VMLGMSMAITIRAIIAITPLS). Residues 191–226 (WMVSHLPFCGSNVVVHSYCEHIALARLACADPVPSS) are Extracellular-facing. Residues 227 to 247 (LYSLIGSSLMVGSDVAFIAAS) form a helical membrane-spanning segment. The Cytoplasmic portion of the chain corresponds to 248 to 267 (YILILKAVFGLSSKTAQLKA). The helical transmembrane segment at 268-288 (LSTCGSHVGVMALYYLPGMAS) threads the bilayer. Topologically, residues 289–304 (IYAAWLGQDVVPLHTQ) are extracellular. A helical transmembrane segment spans residues 305-325 (VLLADLYVIIPATLNPIIYGM). The Cytoplasmic portion of the chain corresponds to 326–350 (RTKQLRERIWSYLMHVLFDHSNLGS).

This sequence belongs to the G-protein coupled receptor 1 family.

It is found in the cell membrane. Its function is as follows. Odorant receptor. The polypeptide is Olfactory receptor 52I2 (OR52I2) (Homo sapiens (Human)).